The following is an 860-amino-acid chain: MQKPELRRFEKLGEMMVQVYERYLPTAFDESMTLLEKMNKIIEYLNQIGRLTNDVVEEWNKVMEWILNDGLEDYVKETLEKWYEEGKFADLVIQVIDELKQFGVSVKTYGAVGDGKTDDIEAFEKAIASGYPVYIPNGKFAVSRSIKIPSNTVITGAGIDNAVVTFLDSVPLGDSLMINDNYATGNENIYLSDFTLDGNCQRFGVNAIGSGGSRDSNLSIHASKNVHINRIKSINATLHGIDITCGGLDYPYMGDGTTAPYPSRDIYISDCEAPSLGDDGITTNNSEYITISNCNCHDPRLLNNCNGIEIDDGSRHVQLSNNISKNCFGGVEVKAHGNVPAAYNVSINGHMSIGDVRSYNFRHIGHHSATDPESMSAKNIICNNLMSVNPNNKRGFQNNAAPRVLAVSAYYGVVVNGLSAYTTEPANLTETAISVQFRARNVSLSGIVMTGFSMAENAIYVIGGSRGGDSVNISNVTLNNSGRNGVAIGSGIDNVSISNVSAIGDGIANPIAIVKTVNSNPQISGVNGIGYPTVCQVAGVAYNDGLTLFNGAFRGATSSSEFIHSEGFVLGSTSKSGATASKSGVVSSSNSIAKAERSLIAGSASCTTSGSYNTILSSLNCETTDTGNLISTSSASKATGNRNIILASYGVLASGSYKVNGGYGGEGTPSASNIKLGNSLNGHIKAKNTVTGANTWSDYGEYFESVDGQAIETGYLVTLEGSKIRKAQEGEKIIGAISETAGIILGESTWNWQGQYLKNEFGGLIYETVEIDEGVFEKMPKINPSYNPKLEYLSRGERPEWNIVGLIGQIMVRIDDTVKIGSGISAKDGIATDGDTGIVMQITTPYESSKGYGVAKVLLK.

Residues Glu309 and Asp311 each coordinate Mg(2+). Residue Glu701 is the Nucleophile of the active site. ATP is bound at residue 752-801; that stretch reads WQGQYLKNEFGGLIYETVEIDEGVFEKMPKINPSYNPKLEYLSRGERPEW.

In terms of assembly, homotrimer. Each appendage is a homotrimer of gp12*. The cofactor is Mg(2+). In terms of processing, autocleaved to produce the 74 kDa gp12* assembly attached to the phage particles. Autocleavage of the C-terminus is a posttrimerization event that is followed by an ATP-dependent release.

It localises to the virion. Functionally, structural component of the 12 appendages that hang from the lower collar. Adhesion protein that binds to the host cell surface during virus attachment and mediates teichoic acids degradation. The polypeptide is Pre-neck appendage protein (12) (Bacillus subtilis (Bacteriophage B103)).